A 658-amino-acid chain; its full sequence is Endoplasmic reticulum mannosyl-oligosaccharide 1,2-alpha-mannosidase (658 aa).

Residues 1–50 (MYPPPAPPPAPHRDFISVTLSLGESYDNSKSRRRRSCWRKWKQLSRLQRN) are Cytoplasmic-facing. The chain crosses the membrane as a helical; Signal-anchor for type II membrane protein span at residues 51 to 71 (VILFVLGFLILCGFLYSLHTA). The Lumenal segment spans residues 72–658 (DQWKALSGRP…AHPLPIWAPA (587 aa)). Residue Ser102 is modified to Phosphoserine. Residues 123-142 (GPPHLQIRPPNTVSKDGMQD) are disordered. Catalysis depends on Glu289, which acts as the Proton donor. Residue Asp422 is part of the active site. Cys486 and Cys515 are oxidised to a cystine. Glu529 serves as the catalytic Proton donor. Glu558 is a catalytic residue. Residue Thr647 coordinates Ca(2+).

This sequence belongs to the glycosyl hydrolase 47 family. Ca(2+) is required as a cofactor.

It is found in the endoplasmic reticulum membrane. It catalyses the reaction N(4)-(alpha-D-Man-(1-&gt;2)-alpha-D-Man-(1-&gt;2)-alpha-D-Man-(1-&gt;3)-[alpha-D-Man-(1-&gt;2)-alpha-D-Man-(1-&gt;3)-[alpha-D-Man-(1-&gt;2)-alpha-D-Man-(1-&gt;6)]-alpha-D-Man-(1-&gt;6)]-beta-D-Man-(1-&gt;4)-beta-D-GlcNAc-(1-&gt;4)-beta-D-GlcNAc)-L-asparaginyl-[protein] (N-glucan mannose isomer 9A1,2,3B1,2,3) + 4 H2O = N(4)-(alpha-D-Man-(1-&gt;3)-[alpha-D-Man-(1-&gt;3)-[alpha-D-Man-(1-&gt;6)]-alpha-D-Man-(1-&gt;6)]-beta-D-Man-(1-&gt;4)-beta-D-GlcNAc-(1-&gt;4)-beta-D-GlcNAc)-L-asparaginyl-[protein] (N-glucan mannose isomer 5A1,2) + 4 beta-D-mannose. It carries out the reaction N(4)-(alpha-D-Man-(1-&gt;2)-alpha-D-Man-(1-&gt;2)-alpha-D-Man-(1-&gt;3)-[alpha-D-Man-(1-&gt;3)-[alpha-D-Man-(1-&gt;2)-alpha-D-Man-(1-&gt;6)]-alpha-D-Man-(1-&gt;6)]-beta-D-Man-(1-&gt;4)-beta-D-GlcNAc-(1-&gt;4)-beta-D-GlcNAc)-L-asparaginyl-[protein] (N-glucan mannose isomer 8A1,2,3B1,3) + 3 H2O = N(4)-(alpha-D-Man-(1-&gt;3)-[alpha-D-Man-(1-&gt;3)-[alpha-D-Man-(1-&gt;6)]-alpha-D-Man-(1-&gt;6)]-beta-D-Man-(1-&gt;4)-beta-D-GlcNAc-(1-&gt;4)-beta-D-GlcNAc)-L-asparaginyl-[protein] (N-glucan mannose isomer 5A1,2) + 3 beta-D-mannose. The protein operates within protein modification; protein glycosylation. Involved in glycoprotein quality control targeting of misfolded glycoproteins for degradation. It primarily trims a single alpha-1,2-linked mannose residue from Man(9)GlcNAc(2) to produce Man(8)GlcNAc(2), but at high enzyme concentrations, as found in the ER quality control compartment (ERQC), it further trims the carbohydrates to Man(5-6)GlcNAc(2). The chain is Endoplasmic reticulum mannosyl-oligosaccharide 1,2-alpha-mannosidase (Man1b1) from Mus musculus (Mouse).